The primary structure comprises 236 residues: Small ribosomal subunit protein uS2c (236 aa).

Component of the chloroplast small ribosomal subunit (SSU). Mature 70S chloroplast ribosomes of higher plants consist of a small (30S) and a large (50S) subunit. The 30S small subunit contains 1 molecule of ribosomal RNA (16S rRNA) and 24 different proteins. The 50S large subunit contains 3 rRNA molecules (23S, 5S and 4.5S rRNA) and 33 different proteins.

Its subcellular location is the plastid. It localises to the chloroplast. Component of the chloroplast ribosome (chloro-ribosome), a dedicated translation machinery responsible for the synthesis of chloroplast genome-encoded proteins, including proteins of the transcription and translation machinery and components of the photosynthetic apparatus. This chain is Small ribosomal subunit protein uS2c (rps2), found in Spinacia oleracea (Spinach).